The sequence spans 138 residues: Large ribosomal subunit protein uL16 (138 aa).

Residues 1–17 are compositionally biased toward basic residues; that stretch reads MLIPRKVKHRKQHHPRQ. A disordered region spans residues 1-23; that stretch reads MLIPRKVKHRKQHHPRQRGIASG.

Belongs to the universal ribosomal protein uL16 family. As to quaternary structure, part of the 50S ribosomal subunit.

Its function is as follows. Binds 23S rRNA and is also seen to make contacts with the A and possibly P site tRNAs. The sequence is that of Large ribosomal subunit protein uL16 from Mycobacterium sp. (strain JLS).